The following is a 1416-amino-acid chain: Uveal autoantigen with coiled-coil domains and ankyrin repeats (1416 aa).

Methionine 1 is modified (N-acetylmethionine). Positions 1 to 24 are disordered; the sequence is MKSLKSRLRRQDVPGPASSGAAAA. ANK repeat units follow at residues 38 to 66, 67 to 96, 100 to 129, 133 to 162, 166 to 195, and 199 to 228; these read LMKA…KLDV, EGRS…DITT, AGRN…PTEH, QGRT…SVNA, DGRT…DVNS, and QNRT…DISL. 2 coiled-coil regions span residues 286–374 and 438–1386; these read VKSH…NRFK and ENEI…IYRT. A Glycyl lysine isopeptide (Lys-Gly) (interchain with G-Cter in SUMO2) cross-link involves residue lysine 1035.

As to quaternary structure, component of the apoptosome complex, composed of APAF1, pro-caspase-9 and UACA. In the complex, it probably interacts directly with APAF1. Interacts with LGALS3, ARF6 and ACTB. Interacts with RAB39A. As to expression, highly expressed in skeletal muscle, heart, kidney and pancreas. Expressed in choroid, retina and epidermal melanocytes. Expressed in eye muscles and thyroid follicular cells.

Its subcellular location is the nucleus. It localises to the cytoplasm. The protein resides in the cytoskeleton. Functionally, regulates APAF1 expression and plays an important role in the regulation of stress-induced apoptosis. Promotes apoptosis by regulating three pathways, apoptosome up-regulation, LGALS3/galectin-3 down-regulation and NF-kappa-B inactivation. Regulates the redistribution of APAF1 into the nucleus after proapoptotic stress. Down-regulates the expression of LGALS3 by inhibiting NFKB1. Its function is as follows. Modulates isoactin dynamics to regulate the morphological alterations required for cell growth and motility. Interaction with ARF6 may modulate cell shape and motility after injury. May be involved in multiple neurite formation. The polypeptide is Uveal autoantigen with coiled-coil domains and ankyrin repeats (UACA) (Homo sapiens (Human)).